The sequence spans 295 residues: Acetylglutamate kinase (295 aa).

Residues 66–67 (GG), arginine 88, and asparagine 193 each bind substrate.

This sequence belongs to the acetylglutamate kinase family. ArgB subfamily.

It localises to the cytoplasm. It catalyses the reaction N-acetyl-L-glutamate + ATP = N-acetyl-L-glutamyl 5-phosphate + ADP. It participates in amino-acid biosynthesis; L-arginine biosynthesis; N(2)-acetyl-L-ornithine from L-glutamate: step 2/4. Catalyzes the ATP-dependent phosphorylation of N-acetyl-L-glutamate. This Sinorhizobium fredii (strain NBRC 101917 / NGR234) protein is Acetylglutamate kinase.